The sequence spans 454 residues: 3-phosphoshikimate 1-carboxyvinyltransferase (454 aa).

Positions M1–P31 are disordered. 3-phosphoshikimate contacts are provided by K34, S35, and R39. A phosphoenolpyruvate-binding site is contributed by K34. Residues G107 and R135 each coordinate phosphoenolpyruvate. The 3-phosphoshikimate site is built by S180, Q182, D334, and K361. Residue Q182 coordinates phosphoenolpyruvate. The Proton acceptor role is filled by D334. Phosphoenolpyruvate-binding residues include R365 and R409.

The protein belongs to the EPSP synthase family. As to quaternary structure, monomer.

The protein localises to the cytoplasm. The catalysed reaction is 3-phosphoshikimate + phosphoenolpyruvate = 5-O-(1-carboxyvinyl)-3-phosphoshikimate + phosphate. Its pathway is metabolic intermediate biosynthesis; chorismate biosynthesis; chorismate from D-erythrose 4-phosphate and phosphoenolpyruvate: step 6/7. Its function is as follows. Catalyzes the transfer of the enolpyruvyl moiety of phosphoenolpyruvate (PEP) to the 5-hydroxyl of shikimate-3-phosphate (S3P) to produce enolpyruvyl shikimate-3-phosphate and inorganic phosphate. The sequence is that of 3-phosphoshikimate 1-carboxyvinyltransferase from Granulibacter bethesdensis (strain ATCC BAA-1260 / CGDNIH1).